Consider the following 920-residue polypeptide: Nonribosomal peptide synthetase atrA (920 aa).

The adenylation (A) domain stretch occupies residues 13–428 (AAAQERCGRV…AGRLKETMII (416 aa)). The Carrier domain occupies 558 to 637 (PPKDELERSL…ELSAALHDLQ (80 aa)). Residue Ser595 is modified to O-(pantetheine 4'-phosphoryl)serine. Residues 656 to 905 (PLWLIHPGVG…YTMLAPEHVF (250 aa)) form a thioesterase (TE) domain region.

This sequence belongs to the NRP synthetase family.

The enzyme catalyses 2 3-(4-hydroxyphenyl)pyruvate + 2 ATP = atromentin + 2 AMP + 2 diphosphate + H(+). In terms of biological role, nonribosomal peptide synthetase that mediates the biosynthesis of atromentin. AtrA first activates 4-hydroxyphenylpyruvate (HPPA) through its A domain to AMP-HPPA. The HPPA unit is then loaded to the T domain and eventually transferred to the TE domain. Another HPPA unit is then loaded onto the T domain. The TE domain then catalyzes the condensation of the two HPPA units and the release of atromentin via cyclization. The polypeptide is Nonribosomal peptide synthetase atrA (Aspergillus terreus (strain NIH 2624 / FGSC A1156)).